The following is a 137-amino-acid chain: Small ribosomal subunit protein uS11 (137 aa).

Residues 116–137 form a disordered region; sequence EDVTPIPHDGTRPKGGRRGRRV.

It belongs to the universal ribosomal protein uS11 family. Part of the 30S ribosomal subunit.

Located on the platform of the 30S subunit. The chain is Small ribosomal subunit protein uS11 from Pyrococcus abyssi (strain GE5 / Orsay).